A 193-amino-acid chain; its full sequence is Holliday junction branch migration complex subunit RuvA (193 aa).

The tract at residues 1-64 is domain I; the sequence is MIGRIAGILL…EDAHLLYGFL (64 aa). A domain II region spans residues 65-139; that stretch reads TQQERTTFRE…GKLGADLGAL (75 aa). A flexible linker region spans residues 139 to 143; that stretch reads LAGAA. Residues 144–193 are domain III; that stretch reads SPSDHATDILNALLALGYSEKEGLAAIKNVPAGTGVSEGIKLALKALSKA.

This sequence belongs to the RuvA family. Homotetramer. Forms an RuvA(8)-RuvB(12)-Holliday junction (HJ) complex. HJ DNA is sandwiched between 2 RuvA tetramers; dsDNA enters through RuvA and exits via RuvB. An RuvB hexamer assembles on each DNA strand where it exits the tetramer. Each RuvB hexamer is contacted by two RuvA subunits (via domain III) on 2 adjacent RuvB subunits; this complex drives branch migration. In the full resolvosome a probable DNA-RuvA(4)-RuvB(12)-RuvC(2) complex forms which resolves the HJ.

Its subcellular location is the cytoplasm. In terms of biological role, the RuvA-RuvB-RuvC complex processes Holliday junction (HJ) DNA during genetic recombination and DNA repair, while the RuvA-RuvB complex plays an important role in the rescue of blocked DNA replication forks via replication fork reversal (RFR). RuvA specifically binds to HJ cruciform DNA, conferring on it an open structure. The RuvB hexamer acts as an ATP-dependent pump, pulling dsDNA into and through the RuvAB complex. HJ branch migration allows RuvC to scan DNA until it finds its consensus sequence, where it cleaves and resolves the cruciform DNA. This chain is Holliday junction branch migration complex subunit RuvA, found in Burkholderia cenocepacia (strain ATCC BAA-245 / DSM 16553 / LMG 16656 / NCTC 13227 / J2315 / CF5610) (Burkholderia cepacia (strain J2315)).